The chain runs to 162 residues: Crossover junction endodeoxyribonuclease RuvC (162 aa).

Catalysis depends on residues Asp8, Glu69, and His141. Mg(2+)-binding residues include Asp8, Glu69, and His141.

It belongs to the RuvC family. As to quaternary structure, homodimer which binds Holliday junction (HJ) DNA. The HJ becomes 2-fold symmetrical on binding to RuvC with unstacked arms; it has a different conformation from HJ DNA in complex with RuvA. In the full resolvosome a probable DNA-RuvA(4)-RuvB(12)-RuvC(2) complex forms which resolves the HJ. Mg(2+) is required as a cofactor.

The protein resides in the cytoplasm. It carries out the reaction Endonucleolytic cleavage at a junction such as a reciprocal single-stranded crossover between two homologous DNA duplexes (Holliday junction).. Functionally, the RuvA-RuvB-RuvC complex processes Holliday junction (HJ) DNA during genetic recombination and DNA repair. Endonuclease that resolves HJ intermediates. Cleaves cruciform DNA by making single-stranded nicks across the HJ at symmetrical positions within the homologous arms, yielding a 5'-phosphate and a 3'-hydroxyl group; requires a central core of homology in the junction. The consensus cleavage sequence is 5'-(A/T)TT(C/G)-3'. Cleavage occurs on the 3'-side of the TT dinucleotide at the point of strand exchange. HJ branch migration catalyzed by RuvA-RuvB allows RuvC to scan DNA until it finds its consensus sequence, where it cleaves and resolves the cruciform DNA. The protein is Crossover junction endodeoxyribonuclease RuvC of Wolbachia pipientis wMel.